A 250-amino-acid polypeptide reads, in one-letter code: Cobalt transport protein CbiM (250 aa).

Residues 1–27 form the signal peptide; it reads MKKPLFFIASACVTIYILFALSPSVYA. Helical transmembrane passes span 33–53, 70–90, 102–122, 134–154, 168–188, and 208–228; these read GFLP…FFLV, LLLA…IPSV, LGAL…VLLF, TLGA…YVLF, VFLA…IQLA, and IFAV…VVVW.

Belongs to the CbiM family. As to quaternary structure, forms an energy-coupling factor (ECF) transporter complex composed of an ATP-binding protein (A component, CbiO), a transmembrane protein (T component, CbiQ) and 2 possible substrate-capture proteins (S components, CbiM and CbiN) of unknown stoichimetry.

Its subcellular location is the cell membrane. It participates in cofactor biosynthesis; adenosylcobalamin biosynthesis. Functionally, part of the energy-coupling factor (ECF) transporter complex CbiMNOQ involved in cobalt import. This Anoxybacillus flavithermus (strain DSM 21510 / WK1) protein is Cobalt transport protein CbiM.